The following is a 122-amino-acid chain: Large ribosomal subunit protein uL18 (122 aa).

Residues 1-11 are compositionally biased toward basic and acidic residues; it reads MLKKPDRNALR. Residues 1–22 form a disordered region; it reads MLKKPDRNALRDKRRRRVRKKI. Over residues 12–22 the composition is skewed to basic residues; that stretch reads DKRRRRVRKKI.

Belongs to the universal ribosomal protein uL18 family. In terms of assembly, part of the 50S ribosomal subunit; part of the 5S rRNA/L5/L18/L25 subcomplex. Contacts the 5S and 23S rRNAs.

Functionally, this is one of the proteins that bind and probably mediate the attachment of the 5S RNA into the large ribosomal subunit, where it forms part of the central protuberance. In Pelotomaculum thermopropionicum (strain DSM 13744 / JCM 10971 / SI), this protein is Large ribosomal subunit protein uL18.